Here is a 285-residue protein sequence, read N- to C-terminus: Putative pyruvate, phosphate dikinase regulatory protein (285 aa).

165 to 172 is a binding site for ADP; the sequence is GVSRTSKT.

This sequence belongs to the pyruvate, phosphate/water dikinase regulatory protein family. PDRP subfamily.

The enzyme catalyses N(tele)-phospho-L-histidyl/L-threonyl-[pyruvate, phosphate dikinase] + ADP = N(tele)-phospho-L-histidyl/O-phospho-L-threonyl-[pyruvate, phosphate dikinase] + AMP + H(+). The catalysed reaction is N(tele)-phospho-L-histidyl/O-phospho-L-threonyl-[pyruvate, phosphate dikinase] + phosphate + H(+) = N(tele)-phospho-L-histidyl/L-threonyl-[pyruvate, phosphate dikinase] + diphosphate. In terms of biological role, bifunctional serine/threonine kinase and phosphorylase involved in the regulation of the pyruvate, phosphate dikinase (PPDK) by catalyzing its phosphorylation/dephosphorylation. This chain is Putative pyruvate, phosphate dikinase regulatory protein, found in Lactobacillus delbrueckii subsp. bulgaricus (strain ATCC BAA-365 / Lb-18).